The sequence spans 391 residues: Putative 12-oxophytodienoate reductase 6 (391 aa).

Residues 42–44, Ala75, and Gln117 each bind FMN; that span reads PMT. 189 to 192 is a substrate binding site; sequence HGAN. Tyr194 acts as the Proton donor in catalysis. An FMN-binding site is contributed by Arg241. Arg282 lines the substrate pocket. FMN contacts are provided by residues Gly312 and 333-334; that span reads GR. Positions 372–391 are disordered; sequence YPFLDEHHHDDDDDSNAPSA. The span at 382-391 shows a compositional bias: acidic residues; that stretch reads DDDDSNAPSA.

It belongs to the NADH:flavin oxidoreductase/NADH oxidase family. FMN serves as cofactor.

In terms of biological role, putative oxophytodienoate reductase that may be involved in the biosynthesis or metabolism of oxylipin signaling molecules. This is Putative 12-oxophytodienoate reductase 6 (OPR6) from Oryza sativa subsp. japonica (Rice).